Reading from the N-terminus, the 842-residue chain is Protein translocase subunit SecA (842 aa).

Residues Gln-85, 103-107 (GEGKT), and Asp-493 contribute to the ATP site. The Zn(2+) site is built by Cys-825, Cys-827, Cys-836, and His-837.

This sequence belongs to the SecA family. Monomer and homodimer. Part of the essential Sec protein translocation apparatus which comprises SecA, SecYEG and auxiliary proteins SecDF. Other proteins may also be involved. Zn(2+) is required as a cofactor.

The protein localises to the cell membrane. It localises to the cytoplasm. The catalysed reaction is ATP + H2O + cellular proteinSide 1 = ADP + phosphate + cellular proteinSide 2.. Its function is as follows. Part of the Sec protein translocase complex. Interacts with the SecYEG preprotein conducting channel. Has a central role in coupling the hydrolysis of ATP to the transfer of proteins into and across the cell membrane, serving as an ATP-driven molecular motor driving the stepwise translocation of polypeptide chains across the membrane. This is Protein translocase subunit SecA from Streptococcus equi subsp. zooepidemicus (strain MGCS10565).